Here is a 275-residue protein sequence, read N- to C-terminus: Polar tube protein 2 (275 aa).

A signal peptide spans 1-18; that stretch reads MLLLLSAVAFVSATAVQS. Residues Asn-132 and Asn-248 are each glycosylated (N-linked (GlcNAc...) asparagine). Residues 233–275 are disordered; that stretch reads IQKKEIKESPKEGDRNTTQEYDGEGSAEDAEGQQPSADGEGLE. The segment covering 234–249 has biased composition (basic and acidic residues); the sequence is QKKEIKESPKEGDRNT. Residues 253–263 show a composition bias toward acidic residues; the sequence is YDGEGSAEDAE.

It is found in the spore polar tube. Involved in formation of a polar tube through which the infectious agent is passed on to the host cell. This Encephalitozoon intestinalis (Microsporidian parasite) protein is Polar tube protein 2 (PTP2).